A 409-amino-acid chain; its full sequence is MGGIKEFLKHEASGGILLMIATVAALLCQNTFLSDFYNEFLKTKFTVSFGEYGLSKPLILWVNDGLMAVFFFLIGLELKREVLEGELKNPSQIALPAIGAAGGLIVPAVIFYLFTKHDSFALGGWAIPTATDIAFALGILSLLGPRVPTSLKIFLMTLAIVDDLCAIVIIALFYTSELSAQMLAVASVCLAALFALNRLGVKSKAAYLIVGAVMWVAVLKSGVHATLAGVVAAFFIPISFKDEPGKSMLKSIEHDLHGWVAFGVLPIFAFVNAGISLRGVGLDEILSPVALGTALGLFVGKQVGVFSFSFLAIKFKLAKLPEGSNFIQLYGIAVLCGVGFTMSLFINSLAYNDTDAFAYADKLAILLGSVVSGAAGFILLKFSAKNQSARIKECKIQIETIVEKCEIKE.

The next 11 helical transmembrane spans lie at 13–33, 58–78, 93–113, 120–140, 153–173, 176–196, 216–236, 256–276, 279–299, 326–346, and 363–383; these read SGGI…NTFL, LILW…GLEL, IALP…IFYL, FALG…LGIL, IFLM…IALF, SELS…LFAL, VAVL…AFFI, LHGW…AGIS, GVGL…GLFV, FIQL…SLFI, and LAIL…LKFS.

This sequence belongs to the NhaA Na(+)/H(+) (TC 2.A.33) antiporter family.

The protein localises to the cell inner membrane. The enzyme catalyses Na(+)(in) + 2 H(+)(out) = Na(+)(out) + 2 H(+)(in). Na(+)/H(+) antiporter that extrudes sodium in exchange for external protons. This Campylobacter concisus (strain 13826) protein is Na(+)/H(+) antiporter NhaA.